Consider the following 414-residue polypeptide: Putative nickel insertion protein (414 aa).

The interval 70-91 (ATHHDHDHSQDQTHHHHADHAP) is disordered.

It belongs to the LarC family.

This chain is Putative nickel insertion protein, found in Picosynechococcus sp. (strain ATCC 27264 / PCC 7002 / PR-6) (Agmenellum quadruplicatum).